Consider the following 160-residue polypeptide: Protein-export protein SecB (160 aa).

Belongs to the SecB family. In terms of assembly, homotetramer, a dimer of dimers. One homotetramer interacts with 1 SecA dimer.

The protein resides in the cytoplasm. Functionally, one of the proteins required for the normal export of preproteins out of the cell cytoplasm. It is a molecular chaperone that binds to a subset of precursor proteins, maintaining them in a translocation-competent state. It also specifically binds to its receptor SecA. The protein is Protein-export protein SecB of Azorhizobium caulinodans (strain ATCC 43989 / DSM 5975 / JCM 20966 / LMG 6465 / NBRC 14845 / NCIMB 13405 / ORS 571).